Consider the following 159-residue polypeptide: MIDPDGFRPNVGIILTNDAGQVLWARRINQDAWQFPQGGINPDETPEDALYRELNEEVGLEREDVQILACTRGWLRYRLPQRLVRTHSQPLCIGQKQKWFLLRLISNEQRVRMDLTGKPEFDGWRWVSYWYPLGQVVTFKREVYRRALKELAPRLLARD.

Positions 6 to 149 (GFRPNVGIIL…KREVYRRALK (144 aa)) constitute a Nudix hydrolase domain. The Nudix box motif lies at 38-59 (GGINPDETPEDALYRELNEEVG).

The protein belongs to the Nudix hydrolase family. RppH subfamily. A divalent metal cation serves as cofactor.

Functionally, accelerates the degradation of transcripts by removing pyrophosphate from the 5'-end of triphosphorylated RNA, leading to a more labile monophosphorylated state that can stimulate subsequent ribonuclease cleavage. This Pseudomonas fluorescens (strain SBW25) protein is RNA pyrophosphohydrolase.